A 311-amino-acid polypeptide reads, in one-letter code: Aspartate carbamoyltransferase catalytic subunit (311 aa).

Carbamoyl phosphate-binding residues include arginine 55 and threonine 56. Residue lysine 83 coordinates L-aspartate. Arginine 105, histidine 134, and glutamine 137 together coordinate carbamoyl phosphate. L-aspartate contacts are provided by arginine 167 and arginine 226. Residues glycine 267 and proline 268 each coordinate carbamoyl phosphate.

Belongs to the aspartate/ornithine carbamoyltransferase superfamily. ATCase family. As to quaternary structure, heterododecamer (2C3:3R2) of six catalytic PyrB chains organized as two trimers (C3), and six regulatory PyrI chains organized as three dimers (R2).

The catalysed reaction is carbamoyl phosphate + L-aspartate = N-carbamoyl-L-aspartate + phosphate + H(+). Its pathway is pyrimidine metabolism; UMP biosynthesis via de novo pathway; (S)-dihydroorotate from bicarbonate: step 2/3. Catalyzes the condensation of carbamoyl phosphate and aspartate to form carbamoyl aspartate and inorganic phosphate, the committed step in the de novo pyrimidine nucleotide biosynthesis pathway. This Corynebacterium jeikeium (strain K411) protein is Aspartate carbamoyltransferase catalytic subunit.